We begin with the raw amino-acid sequence, 265 residues long: Short-chain dehydrogenase/reductase fsr5 (265 aa).

Positions 1–32 (MASLGKYVSKLAGSRVLVIGGSSGIGFGVAEA) are cleaved as a signal peptide. Positions 22, 23, 25, 45, and 50 each coordinate NADP(+). N-linked (GlcNAc...) asparagine glycosylation is present at Asn-62. Residues Asn-88, Arg-130, and Thr-204 each contribute to the NADP(+) site. 2 N-linked (GlcNAc...) asparagine glycosylation sites follow: Asn-218 and Asn-250.

This sequence belongs to the short-chain dehydrogenases/reductases (SDR) family.

Its function is as follows. Short-chain dehydrogenase/reductase; part of the gene cluster that mediates the biosynthesis of fusarubins, highly pigmented naphthoquinones responsible for the coloration of the fruiting bodies. The non-reducing polyketide synthase FSR1 is responsible for the condensation of seven acetyl-CoA units to yield a haptaketide. After rings A and B are formed by aldol-type cyclization, the PKS-derived product is released as 6-O-demethylfusarubinaldehyde. Then, two hydroxyl groups at C-5 and C-10 are incorporated by FSR3, and simultaneously hydroxyl groups at C-6 and C-8 are methylated by FSR2. The aldehyde is, on the one hand, reduced by FSR3 to 8-O-methylfusarubin alcohol, which equilibrates mainly with 8-O-methylfusarubin and only small amounts of 8-O-methylnectriafurone. On the other hand, the aldehyde can be oxidized to form 8-O-methylfusarubinic acid, a reaction driven by FSR3 equilibrating with 8-O-methylfusarubinlactone, finally resulting in 8-O-methylanhydrofusarubinlactol after a further reduction step and loss of water. 8-O-Methylfusarubinic acid can also undergo decarboxylation, resulting in 8-O-methyl-13-hydroxynorjavanicin after another hydroxylation step at C-13. Both steps are most likely also accomplished by FSR3. No enzymatic function has been determined so far for either FSR4 and FSR5. Their deletion does not alter the product spectrum, but the possibility that they catalyze specific enzymatic steps during perithecium development cannot be ruled out. FSR4 might possess a regulatory function in the biosynthesis of fusarubins. This Gibberella fujikuroi (strain CBS 195.34 / IMI 58289 / NRRL A-6831) (Bakanae and foot rot disease fungus) protein is Short-chain dehydrogenase/reductase fsr5.